Consider the following 434-residue polypeptide: Beta-enolase (434 aa).

The residue at position 2 (Ala-2) is an N-acetylalanine. Phosphothreonine is present on Thr-72. Phosphoserine occurs at positions 83 and 157. Substrate is bound by residues His-158 and Glu-167. A Phosphoserine modification is found at Ser-176. Position 205 is a phosphothreonine (Thr-205). Glu-210 acts as the Proton donor in catalysis. The residue at position 229 (Thr-229) is a Phosphothreonine. The residue at position 236 (Tyr-236) is a Phosphotyrosine. Residue Asp-245 participates in Mg(2+) binding. Ser-263 carries the post-translational modification Phosphoserine. The substrate site is built by Glu-293 and Asp-318. Residues Glu-293 and Asp-318 each coordinate Mg(2+). Lys-343 serves as the catalytic Proton acceptor. Residues 370–373 and Lys-394 each bind substrate; that span reads SHRS.

This sequence belongs to the enolase family. As to quaternary structure, mammalian enolase is composed of 3 isozyme subunits, alpha, beta and gamma, which can form homodimers or heterodimers which are cell-type and development-specific. Interacts with PNKD. Mg(2+) is required as a cofactor. The alpha/alpha homodimer is expressed in embryo and in most adult tissues. The alpha/beta heterodimer and the beta/beta homodimer are found in striated muscle, and the alpha/gamma heterodimer and the gamma/gamma homodimer in neurons.

Its subcellular location is the cytoplasm. It catalyses the reaction (2R)-2-phosphoglycerate = phosphoenolpyruvate + H2O. The protein operates within carbohydrate degradation; glycolysis; pyruvate from D-glyceraldehyde 3-phosphate: step 4/5. Functionally, glycolytic enzyme that catalyzes the conversion of 2-phosphoglycerate to phosphoenolpyruvate. Appears to have a function in striated muscle development and regeneration. This is Beta-enolase (ENO3) from Homo sapiens (Human).